The following is a 231-amino-acid chain: Probable septum site-determining protein MinC (231 aa).

It belongs to the MinC family. Interacts with MinD and FtsZ.

Its function is as follows. Cell division inhibitor that blocks the formation of polar Z ring septums. Rapidly oscillates between the poles of the cell to destabilize FtsZ filaments that have formed before they mature into polar Z rings. Prevents FtsZ polymerization. This is Probable septum site-determining protein MinC from Baumannia cicadellinicola subsp. Homalodisca coagulata.